A 318-amino-acid polypeptide reads, in one-letter code: 1-aminocyclopropane-1-carboxylate oxidase 1 (318 aa).

The 102-residue stretch at 153–254 folds into the Fe2OG dioxygenase domain; sequence PTFGTKVSNY…RMSIASFYNP (102 aa). 3 residues coordinate Fe cation: histidine 177, aspartate 179, and histidine 234.

Belongs to the iron/ascorbate-dependent oxidoreductase family. Requires Fe cation as cofactor. In terms of tissue distribution, fruit.

The catalysed reaction is 1-aminocyclopropane-1-carboxylate + L-ascorbate + O2 = ethene + L-dehydroascorbate + hydrogen cyanide + CO2 + 2 H2O. It participates in alkene biosynthesis; ethylene biosynthesis via S-adenosyl-L-methionine; ethylene from S-adenosyl-L-methionine: step 2/2. The sequence is that of 1-aminocyclopropane-1-carboxylate oxidase 1 (ACO1) from Cucumis melo (Muskmelon).